Reading from the N-terminus, the 296-residue chain is Phosphatidylglycerol--prolipoprotein diacylglyceryl transferase (296 aa).

Helical transmembrane passes span 10 to 30 (IAFS…LAAF), 57 to 77 (LLFY…MLFY), 92 to 112 (VWEG…ACWL), and 119 to 139 (LHFF…LGFG). Arg-140 serves as a coordination point for a 1,2-diacyl-sn-glycero-3-phospho-(1'-sn-glycerol). Transmembrane regions (helical) follow at residues 194 to 214 (QLYE…TFSM), 220 to 240 (YAVS…VEFV), and 254 to 274 (WLTM…VLLA).

It belongs to the Lgt family.

The protein localises to the cell inner membrane. The enzyme catalyses L-cysteinyl-[prolipoprotein] + a 1,2-diacyl-sn-glycero-3-phospho-(1'-sn-glycerol) = an S-1,2-diacyl-sn-glyceryl-L-cysteinyl-[prolipoprotein] + sn-glycerol 1-phosphate + H(+). Its pathway is protein modification; lipoprotein biosynthesis (diacylglyceryl transfer). Catalyzes the transfer of the diacylglyceryl group from phosphatidylglycerol to the sulfhydryl group of the N-terminal cysteine of a prolipoprotein, the first step in the formation of mature lipoproteins. The polypeptide is Phosphatidylglycerol--prolipoprotein diacylglyceryl transferase (Xanthomonas euvesicatoria pv. vesicatoria (strain 85-10) (Xanthomonas campestris pv. vesicatoria)).